A 424-amino-acid chain; its full sequence is CinA-like protein (424 aa).

The protein belongs to the CinA family.

The chain is CinA-like protein from Syntrophobacter fumaroxidans (strain DSM 10017 / MPOB).